The primary structure comprises 354 residues: Long form salivary protein D7L3 (354 aa).

The signal sequence occupies residues 1–26 (MQLTPRSVHLVHLLLAATTLISPSWS).

This sequence belongs to the PBP/GOBP family.

The protein resides in the secreted. In terms of biological role, modulates blood feeding of female mosquitoes on vertebrate species by binding and sequestering different mediators involved in the host response. Binds serotonin with high affinity. Binds weakly noradrenaline and histamine. Does not bind tryptamine, octopamine, dopamine, adrenaline, leukotriene C4, leukotriene D4, leukotriene B4, ADP and U-46619, a stable analog of thromboxane A2. Inhibits agonist-induced platelet aggregation. Exhibits vasodilating activity. The polypeptide is Long form salivary protein D7L3 (Anopheles gambiae (African malaria mosquito)).